The sequence spans 64 residues: Conotoxin LiC121 (64 aa).

Positions 1-22 are cleaved as a signal peptide; the sequence is MRCVPVFIILLLLSPSAPSVDA. A propeptide spanning residues 23–48 is cleaved from the precursor; it reads HPKTKDDVPLASFHDDAKRTLQRLWI.

This sequence belongs to the conotoxin T superfamily. In terms of processing, contains 2 disulfide bonds that can be either 'C1-C3, C2-C4' or 'C1-C4, C2-C3', since these disulfide connectivities have been observed for conotoxins with cysteine framework V (for examples, see AC P0DQQ7 and AC P81755). Expressed by the venom duct.

The protein resides in the secreted. The chain is Conotoxin LiC121 from Conus lividus (Livid cone).